The sequence spans 517 residues: Serine hydroxymethyltransferase 1, mitochondrial (517 aa).

The transit peptide at 1 to 31 (MAMALALRRLSSSADKPLQRLFNGGHLYSMS) directs the protein to the mitochondrion. Lys287 is subject to N6-(pyridoxal phosphate)lysine.

It belongs to the SHMT family. In terms of assembly, homotetramer. Pyridoxal 5'-phosphate serves as cofactor.

The protein localises to the mitochondrion. The catalysed reaction is (6R)-5,10-methylene-5,6,7,8-tetrahydrofolate + glycine + H2O = (6S)-5,6,7,8-tetrahydrofolate + L-serine. It participates in one-carbon metabolism; tetrahydrofolate interconversion. In terms of biological role, catalyzes the interconversion of serine and glycine. The sequence is that of Serine hydroxymethyltransferase 1, mitochondrial from Flaveria pringlei.